The chain runs to 311 residues: Large ribosomal subunit protein uL18 (311 aa).

Belongs to the universal ribosomal protein uL18 family. Component of the large ribosomal subunit (LSU).

It localises to the cytoplasm. The protein localises to the nucleus. Functionally, component of the ribosome, a large ribonucleoprotein complex responsible for the synthesis of proteins in the cell. The small ribosomal subunit (SSU) binds messenger RNAs (mRNAs) and translates the encoded message by selecting cognate aminoacyl-transfer RNA (tRNA) molecules. The large subunit (LSU) contains the ribosomal catalytic site termed the peptidyl transferase center (PTC), which catalyzes the formation of peptide bonds, thereby polymerizing the amino acids delivered by tRNAs into a polypeptide chain. The nascent polypeptides leave the ribosome through a tunnel in the LSU and interact with protein factors that function in enzymatic processing, targeting, and the membrane insertion of nascent chains at the exit of the ribosomal tunnel. The sequence is that of Large ribosomal subunit protein uL18 (RPL5) from Eimeria tenella (Coccidian parasite).